The sequence spans 242 residues: Glucosamine-6-phosphate deaminase (242 aa).

The active-site Proton acceptor; for enolization step is the Asp-67. Residue Asn-136 is the For ring-opening step of the active site. His-138 functions as the Proton acceptor; for ring-opening step in the catalytic mechanism. Glu-143 serves as the catalytic For ring-opening step.

The protein belongs to the glucosamine/galactosamine-6-phosphate isomerase family. NagB subfamily.

The enzyme catalyses alpha-D-glucosamine 6-phosphate + H2O = beta-D-fructose 6-phosphate + NH4(+). Its pathway is amino-sugar metabolism; N-acetylneuraminate degradation; D-fructose 6-phosphate from N-acetylneuraminate: step 5/5. Its function is as follows. Catalyzes the reversible isomerization-deamination of glucosamine 6-phosphate (GlcN6P) to form fructose 6-phosphate (Fru6P) and ammonium ion. The sequence is that of Glucosamine-6-phosphate deaminase from Alkaliphilus metalliredigens (strain QYMF).